The sequence spans 185 residues: Elongation factor P (185 aa).

The protein belongs to the elongation factor P family.

The protein localises to the cytoplasm. Its pathway is protein biosynthesis; polypeptide chain elongation. In terms of biological role, involved in peptide bond synthesis. Stimulates efficient translation and peptide-bond synthesis on native or reconstituted 70S ribosomes in vitro. Probably functions indirectly by altering the affinity of the ribosome for aminoacyl-tRNA, thus increasing their reactivity as acceptors for peptidyl transferase. The sequence is that of Elongation factor P from Paraburkholderia xenovorans (strain LB400).